A 326-amino-acid chain; its full sequence is Putative nickel insertion protein (326 aa).

This sequence belongs to the LarC family.

This is Putative nickel insertion protein from Enterococcus faecalis (strain ATCC 700802 / V583).